The chain runs to 599 residues: DNA mismatch repair protein MutL (599 aa).

It belongs to the DNA mismatch repair MutL/HexB family.

Functionally, this protein is involved in the repair of mismatches in DNA. It is required for dam-dependent methyl-directed DNA mismatch repair. May act as a 'molecular matchmaker', a protein that promotes the formation of a stable complex between two or more DNA-binding proteins in an ATP-dependent manner without itself being part of a final effector complex. The protein is DNA mismatch repair protein MutL of Rhodopseudomonas palustris (strain BisB18).